The chain runs to 279 residues: Phosphonates import ATP-binding protein PhnC 2 (279 aa).

The ABC transporter domain maps to 10–253; the sequence is LSLKGVSVRY…VARNLYAKQS (244 aa). Residue 43-50 coordinates ATP; sequence GASGAGKS. A compositionally biased stretch (low complexity) spans 253 to 262; the sequence is SNASNTSAST. The tract at residues 253-279 is disordered; that stretch reads SNASNTSASTDSPRTLQSSQTKELLPC. Residues 263-279 are compositionally biased toward polar residues; it reads DSPRTLQSSQTKELLPC.

The protein belongs to the ABC transporter superfamily. Phosphonates importer (TC 3.A.1.9.1) family. In terms of assembly, the complex is composed of two ATP-binding proteins (PhnC), two transmembrane proteins (PhnE) and a solute-binding protein (PhnD).

It is found in the cell inner membrane. The enzyme catalyses phosphonate(out) + ATP + H2O = phosphonate(in) + ADP + phosphate + H(+). Its function is as follows. Part of the ABC transporter complex PhnCDE involved in phosphonates import. Responsible for energy coupling to the transport system. The sequence is that of Phosphonates import ATP-binding protein PhnC 2 from Cupriavidus metallidurans (strain ATCC 43123 / DSM 2839 / NBRC 102507 / CH34) (Ralstonia metallidurans).